We begin with the raw amino-acid sequence, 514 residues long: Na(+)/H(+) antiporter NhaB (514 aa).

A run of 11 helical transmembrane segments spans residues 13 to 33 (FMGN…IINP), 34 to 54 (LIFF…EFIF), 96 to 116 (VILL…LLLF), 136 to 156 (CFAS…AVVI), 203 to 223 (LMMH…VGEP), 236 to 256 (FVTF…AGLA), 304 to 324 (ALIG…VGII), 349 to 369 (EEAL…AVII), 392 to 412 (LFYL…VGTV), 448 to 468 (ATPN…SPLI), and 479 to 499 (ALPY…FWLV).

This sequence belongs to the NhaB Na(+)/H(+) (TC 2.A.34) antiporter family.

Its subcellular location is the cell inner membrane. It catalyses the reaction 2 Na(+)(in) + 3 H(+)(out) = 2 Na(+)(out) + 3 H(+)(in). In terms of biological role, na(+)/H(+) antiporter that extrudes sodium in exchange for external protons. The sequence is that of Na(+)/H(+) antiporter NhaB from Proteus mirabilis (strain HI4320).